The sequence spans 324 residues: D-alanine--D-alanine ligase (324 aa).

One can recognise an ATP-grasp domain in the interval 121-321 (NQYLKAFGVR…IKDVMTDIIE (201 aa)). 149–204 (VEKIGLPCFIKPNLGGSSFGVTKVKTREQIQPAIAKAFSEAEEVMIEAFMGGTELT) provides a ligand contact to ATP. Positions 275, 288, and 290 each coordinate Mg(2+).

It belongs to the D-alanine--D-alanine ligase family. The cofactor is Mg(2+). Requires Mn(2+) as cofactor.

It is found in the cytoplasm. It carries out the reaction 2 D-alanine + ATP = D-alanyl-D-alanine + ADP + phosphate + H(+). It functions in the pathway cell wall biogenesis; peptidoglycan biosynthesis. In terms of biological role, cell wall formation. This chain is D-alanine--D-alanine ligase, found in Bacteroides fragilis (strain YCH46).